A 347-amino-acid chain; its full sequence is GMP reductase (347 aa).

An NADP(+)-binding site is contributed by 108 to 131 (ADFQKTKDIMALTEDLIFICIDIA). K(+) is bound by residues Gly181 and Gly183. The active-site Thioimidate intermediate is Cys186. Position 216-239 (216-239 (IIGDGGCSCAGDVSKAFGGGADFV)) interacts with NADP(+).

This sequence belongs to the IMPDH/GMPR family. GuaC type 1 subfamily. As to quaternary structure, homotetramer.

It catalyses the reaction IMP + NH4(+) + NADP(+) = GMP + NADPH + 2 H(+). Functionally, catalyzes the irreversible NADPH-dependent deamination of GMP to IMP. It functions in the conversion of nucleobase, nucleoside and nucleotide derivatives of G to A nucleotides, and in maintaining the intracellular balance of A and G nucleotides. This Photobacterium profundum (strain SS9) protein is GMP reductase.